Here is a 130-residue protein sequence, read N- to C-terminus: Large ribosomal subunit protein uL14 (130 aa).

It belongs to the universal ribosomal protein uL14 family. Part of the 50S ribosomal subunit. Forms a cluster with proteins L3 and L19. In the 70S ribosome, L14 and L19 interact and together make contacts with the 16S rRNA in bridges B5 and B8.

Its function is as follows. Binds to 23S rRNA. Forms part of two intersubunit bridges in the 70S ribosome. The protein is Large ribosomal subunit protein uL14 of Leptospira interrogans serogroup Icterohaemorrhagiae serovar copenhageni (strain Fiocruz L1-130).